We begin with the raw amino-acid sequence, 227 residues long: MAYPFQLGLQDATSPIMEELLHFHDHTLMIVFLISSLVLYIISLMLTTKLTHTSTMDAQEVETVWTILPAIILILIALPSLRILYMMDEINNPSLTVKTMGHQWYWSYEYTDYEDLNFDSYMIPTQELKPGELRLLEVDNRVVLPMEMTIRMLISSEDVLHSWAVPSLGLKTDAIPGRLNQTTLMAMRPGLYYGQCSEICGSNHSFMPIVLEMVPLSYFETWSALMV.

The Mitochondrial intermembrane portion of the chain corresponds to 1 to 14 (MAYPFQLGLQDATS). Residues 15-45 (PIMEELLHFHDHTLMIVFLISSLVLYIISLM) traverse the membrane as a helical segment. The Mitochondrial matrix segment spans residues 46-59 (LTTKLTHTSTMDAQ). A helical membrane pass occupies residues 60-87 (EVETVWTILPAIILILIALPSLRILYMM). Topologically, residues 88 to 227 (DEINNPSLTV…YFETWSALMV (140 aa)) are mitochondrial intermembrane. Cu cation is bound by residues His161, Cys196, Glu198, Cys200, His204, and Met207. Residue Glu198 coordinates Mg(2+). Position 218 is a phosphotyrosine (Tyr218).

The protein belongs to the cytochrome c oxidase subunit 2 family. Component of the cytochrome c oxidase (complex IV, CIV), a multisubunit enzyme composed of 14 subunits. The complex is composed of a catalytic core of 3 subunits MT-CO1, MT-CO2 and MT-CO3, encoded in the mitochondrial DNA, and 11 supernumerary subunits COX4I, COX5A, COX5B, COX6A, COX6B, COX6C, COX7A, COX7B, COX7C, COX8 and NDUFA4, which are encoded in the nuclear genome. The complex exists as a monomer or a dimer and forms supercomplexes (SCs) in the inner mitochondrial membrane with NADH-ubiquinone oxidoreductase (complex I, CI) and ubiquinol-cytochrome c oxidoreductase (cytochrome b-c1 complex, complex III, CIII), resulting in different assemblies (supercomplex SCI(1)III(2)IV(1) and megacomplex MCI(2)III(2)IV(2)). Found in a complex with TMEM177, COA6, COX18, COX20, SCO1 and SCO2. Interacts with TMEM177 in a COX20-dependent manner. Interacts with COX20. Interacts with COX16. It depends on Cu cation as a cofactor.

The protein localises to the mitochondrion inner membrane. It carries out the reaction 4 Fe(II)-[cytochrome c] + O2 + 8 H(+)(in) = 4 Fe(III)-[cytochrome c] + 2 H2O + 4 H(+)(out). Component of the cytochrome c oxidase, the last enzyme in the mitochondrial electron transport chain which drives oxidative phosphorylation. The respiratory chain contains 3 multisubunit complexes succinate dehydrogenase (complex II, CII), ubiquinol-cytochrome c oxidoreductase (cytochrome b-c1 complex, complex III, CIII) and cytochrome c oxidase (complex IV, CIV), that cooperate to transfer electrons derived from NADH and succinate to molecular oxygen, creating an electrochemical gradient over the inner membrane that drives transmembrane transport and the ATP synthase. Cytochrome c oxidase is the component of the respiratory chain that catalyzes the reduction of oxygen to water. Electrons originating from reduced cytochrome c in the intermembrane space (IMS) are transferred via the dinuclear copper A center (CU(A)) of subunit 2 and heme A of subunit 1 to the active site in subunit 1, a binuclear center (BNC) formed by heme A3 and copper B (CU(B)). The BNC reduces molecular oxygen to 2 water molecules using 4 electrons from cytochrome c in the IMS and 4 protons from the mitochondrial matrix. The chain is Cytochrome c oxidase subunit 2 (MT-CO2) from Canis lupus familiaris (Dog).